The primary structure comprises 474 residues: Aspartyl/glutamyl-tRNA(Asn/Gln) amidotransferase subunit B (474 aa).

It belongs to the GatB/GatE family. GatB subfamily. As to quaternary structure, heterotrimer of A, B and C subunits.

It carries out the reaction L-glutamyl-tRNA(Gln) + L-glutamine + ATP + H2O = L-glutaminyl-tRNA(Gln) + L-glutamate + ADP + phosphate + H(+). It catalyses the reaction L-aspartyl-tRNA(Asn) + L-glutamine + ATP + H2O = L-asparaginyl-tRNA(Asn) + L-glutamate + ADP + phosphate + 2 H(+). Allows the formation of correctly charged Asn-tRNA(Asn) or Gln-tRNA(Gln) through the transamidation of misacylated Asp-tRNA(Asn) or Glu-tRNA(Gln) in organisms which lack either or both of asparaginyl-tRNA or glutaminyl-tRNA synthetases. The reaction takes place in the presence of glutamine and ATP through an activated phospho-Asp-tRNA(Asn) or phospho-Glu-tRNA(Gln). The sequence is that of Aspartyl/glutamyl-tRNA(Asn/Gln) amidotransferase subunit B from Coprothermobacter proteolyticus (strain ATCC 35245 / DSM 5265 / OCM 4 / BT).